A 220-amino-acid polypeptide reads, in one-letter code: Claudin-24 (220 aa).

Residues 1–10 (MALIFRTAMQ) are Cytoplasmic-facing. The helical transmembrane segment at 11-31 (SVGLLLSLLGWILSIITTYLP) threads the bilayer. At 32–81 (HWKNLNLDLNEMENWTMGLWQTCVIQEEVGMQCKDFDSFLALPAELRVSR) the chain is on the extracellular side. Residues 82–102 (ILMFLSNGLGFLGLLVSGFGL) traverse the membrane as a helical segment. The Cytoplasmic portion of the chain corresponds to 103–117 (DCLRIGESQRDLKRR). The chain crosses the membrane as a helical span at residues 118-138 (LLILGGILSWASGITALVPVS). Residues 139-161 (WVAHKTVQEFWDENVPDFVPRWE) are Extracellular-facing. A helical transmembrane segment spans residues 162–182 (FGEALFLGWFAGLSLLLGGCL). The Cytoplasmic segment spans residues 183-220 (LNCAACSSHAPLALGHYAVAQMQTQCPYLEDGTADPQV).

Belongs to the claudin family.

The protein localises to the cell junction. Its subcellular location is the tight junction. The protein resides in the cell membrane. Its function is as follows. Plays a major role in tight junction-specific obliteration of the intercellular space, through calcium-independent cell-adhesion activity. This is Claudin-24 from Homo sapiens (Human).